A 157-amino-acid polypeptide reads, in one-letter code: Protein Smg (157 aa).

Belongs to the Smg family.

This Buchnera aphidicola subsp. Acyrthosiphon pisum (strain Tuc7) protein is Protein Smg.